Reading from the N-terminus, the 489-residue chain is N-succinylglutamate 5-semialdehyde dehydrogenase (489 aa).

223–228 (GSSRTG) serves as a coordination point for NAD(+). Active-site residues include Glu246 and Cys280.

Belongs to the aldehyde dehydrogenase family. AstD subfamily.

It catalyses the reaction N-succinyl-L-glutamate 5-semialdehyde + NAD(+) + H2O = N-succinyl-L-glutamate + NADH + 2 H(+). The protein operates within amino-acid degradation; L-arginine degradation via AST pathway; L-glutamate and succinate from L-arginine: step 4/5. Its function is as follows. Catalyzes the NAD-dependent reduction of succinylglutamate semialdehyde into succinylglutamate. The polypeptide is N-succinylglutamate 5-semialdehyde dehydrogenase (Aeromonas hydrophila subsp. hydrophila (strain ATCC 7966 / DSM 30187 / BCRC 13018 / CCUG 14551 / JCM 1027 / KCTC 2358 / NCIMB 9240 / NCTC 8049)).